Consider the following 305-residue polypeptide: HTH-type transcriptional regulator KdgR (305 aa).

One can recognise an HTH iclR-type domain in the interval V55–L116. A DNA-binding region (H-T-H motif) is located at residues I76–Q95. Positions L131–Y300 constitute an IclR-ED domain.

Homodimer.

The protein resides in the cytoplasm. In terms of biological role, transcriptional repressor that negatively regulates the expression of genes involved in pectinolysis and in pectinase secretion. Controls genes involved in pectin catabolism, including the pectinase genes (pelA, pelB, pelC, pelE), genes involved in pectin catabolism (kdgT, ogl, kduI-kdgF) and the outT gene involved in pectinase secretion. Acts by binding directly to KdgR binding sites (KdgR-box) in the gene operator/promoter region. This is HTH-type transcriptional regulator KdgR from Dickeya chrysanthemi (Pectobacterium chrysanthemi).